Here is a 138-residue protein sequence, read N- to C-terminus: MSGEEEENAAELKIGDEFLKAKCLMNCEVSLILEHKFEQLQQISEDPMNQVSQVFEKSLQYVKRFSRYKNPDAVRQVREILSRHQLTEFELCVLGNLCPETVEEAVAMVPSLKTKGRAHDDEAIEKMLNDLSLVKRFE.

At S2 the chain carries N-acetylserine.

It belongs to the eukaryotic RPB4 RNA polymerase subunit family. Component of the RNA polymerase II complex consisting of at least 12 subunits. Interacts with NRPB7.

The protein resides in the nucleus. In terms of biological role, DNA-dependent RNA polymerase catalyzes the transcription of DNA into RNA using the four ribonucleoside triphosphates as substrates. Second largest component of RNA polymerase II which synthesizes mRNA precursors and many functional non-coding RNAs. Proposed to contribute to the polymerase catalytic activity and forms the polymerase active center together with the largest subunit. Pol II is the central component of the basal RNA polymerase II transcription machinery. It is composed of mobile elements that move relative to each other. This Arabidopsis thaliana (Mouse-ear cress) protein is DNA-directed RNA polymerase II subunit 4 (NRPB4).